The primary structure comprises 285 residues: Putative sugar uptake protein lp_2503 (285 aa).

The next 9 membrane-spanning stretches (helical) occupy residues 2–21, 31–48, 55–72, 112–134, 147–169, 179–196, 209–228, 233–255, and 264–283; these read GILIALIPAIAWGSIGLISG, TLGMTMGALVFGLALWAV, SKIWLIGIVSGLFWSIGQ, GNMYWIGSASVIVLIAGAVLTSL, NWGVGIRALILSTIGYAGYTIVV, VVMPQAVGMLLGALIWSF, NIVTGLVWGIGNLFMFMAMA, AVAYSLSQMGIVISTFGSIYLLG, and VYVVIGSILVIVGGVALSLM.

The protein belongs to the GRP transporter (TC 2.A.7.5) family.

Its subcellular location is the cell membrane. The sequence is that of Putative sugar uptake protein lp_2503 from Lactiplantibacillus plantarum (strain ATCC BAA-793 / NCIMB 8826 / WCFS1) (Lactobacillus plantarum).